The primary structure comprises 195 residues: Cysteine/O-acetylserine efflux protein (195 aa).

Residues 1–7 (MTPTLLS) are Periplasmic-facing. A helical membrane pass occupies residues 8-28 (AFWTYTLITAMTPGPNNILAL). The Cytoplasmic portion of the chain corresponds to 29–46 (SSATTHGFHQSTRVLAGM). Residues 47–67 (SLGFLIVMLLCAGISFSLAVI) traverse the membrane as a helical segment. Topologically, residues 68-69 (DP) are periplasmic. Residues 70 to 90 (AAVHLLSWAGAAYIVWLAWKI) traverse the membrane as a helical segment. Residues 91-104 (ATSPTKEDGLQTKP) are Cytoplasmic-facing. Residues 105 to 125 (ISFWASFALQFVNVKIILYGV) traverse the membrane as a helical segment. Over 126 to 141 (TALSTFVLPQTQALSW) the chain is Periplasmic. The chain crosses the membrane as a helical span at residues 142-162 (IVGVSVLLAMIGTFGNVCWAL). Topologically, residues 163 to 176 (AGHLFQRLFRQYGR) are cytoplasmic. Residues 177–194 (QLNIVLALLLIYCAVRIF) traverse the membrane as a helical segment. Tyr-195 is a topological domain (periplasmic).

Belongs to the Rht family.

The protein resides in the cell inner membrane. It carries out the reaction O-acetyl-L-serine(in) = O-acetyl-L-serine(out). The enzyme catalyses L-cysteine(in) = L-cysteine(out). Exporter of O-acetylserine (OAS) and cysteine. The sequence is that of Cysteine/O-acetylserine efflux protein (eamB) from Escherichia coli O157:H7.